The chain runs to 188 residues: uncharacterized protein (188 aa).

Residues Ala-121–Glu-142 are disordered. Residues Arg-130–Glu-142 show a composition bias toward basic and acidic residues.

The protein belongs to the chlamydial CPn_0422/CT_273/TC_0545 family.

This is an uncharacterized protein from Chlamydia trachomatis serovar D (strain ATCC VR-885 / DSM 19411 / UW-3/Cx).